A 216-amino-acid chain; its full sequence is Urease operon 23 kDa accessory protein (216 aa).

Functionally, involved in the expression of hydrogenase activity. May be a regulatory gene affecting the expression of the hydrogenase operon or could be involved in the process of nickel incorporation into the hydrogenase apoenzyme. In Rhizobium meliloti (strain 1021) (Ensifer meliloti), this protein is Urease operon 23 kDa accessory protein.